The primary structure comprises 130 residues: Holo-[acyl-carrier-protein] synthase (130 aa).

Mg(2+)-binding residues include Asp-9 and Glu-58.

Belongs to the P-Pant transferase superfamily. AcpS family. It depends on Mg(2+) as a cofactor.

The protein localises to the cytoplasm. The enzyme catalyses apo-[ACP] + CoA = holo-[ACP] + adenosine 3',5'-bisphosphate + H(+). In terms of biological role, transfers the 4'-phosphopantetheine moiety from coenzyme A to a Ser of acyl-carrier-protein. In Mycobacterium leprae (strain Br4923), this protein is Holo-[acyl-carrier-protein] synthase.